A 442-amino-acid polypeptide reads, in one-letter code: D(2) dopamine receptor A (442 aa).

The Extracellular segment spans residues Met-1–Tyr-31. N-linked (GlcNAc...) asparagine glycans are attached at residues Asn-5, Asn-15, and Asn-18. The chain crosses the membrane as a helical span at residues Ala-32–Ser-54. Residues Arg-55–Asn-64 are Cytoplasmic-facing. The helical transmembrane segment at Tyr-65–Tyr-87 threads the bilayer. At Met-88–Asp-102 the chain is on the extracellular side. A disulfide bond links Cys-101 and Cys-176. Residues Ile-103–Ile-124 traverse the membrane as a helical segment. At Asp-125–Arg-145 the chain is on the cytoplasmic side. A helical membrane pass occupies residues Val-146–Phe-166. Residues Gly-167–Ala-182 are Extracellular-facing. Residues Phe-183–Tyr-207 traverse the membrane as a helical segment. At Ile-208–Gln-372 the chain is on the cytoplasmic side. The segment at Asp-273 to Lys-335 is disordered. A compositionally biased stretch (polar residues) spans Ala-304 to Val-318. Residues Tyr-322 to Lys-335 show a composition bias toward basic and acidic residues. The chain crosses the membrane as a helical span at residues Met-373–Leu-394. The Extracellular portion of the chain corresponds to Asn-395 to Ser-408. Cys-398 and Cys-400 form a disulfide bridge. The chain crosses the membrane as a helical span at residues Ala-409–Val-430. The Cytoplasmic segment spans residues Glu-431 to Cys-442. Cys-442 carries the S-palmitoyl cysteine lipid modification.

The protein belongs to the G-protein coupled receptor 1 family. In terms of processing, palmitoylated. Palmitoylation is probably required for proper localization to the plasma membrane and stability of the receptor. In terms of tissue distribution, brain; pituitary.

The protein localises to the cell membrane. Its subcellular location is the golgi apparatus membrane. In terms of biological role, this is one of the five types (D1 to D5) of receptors for dopamine. The activity of this receptor is mediated by G proteins which inhibits adenylyl cyclase. In Xenopus D2R is involved in the regulation of the melanotrope cells of the intermediate pituitary during background adaptation of the animal. The sequence is that of D(2) dopamine receptor A (drd2-a) from Xenopus laevis (African clawed frog).